The chain runs to 341 residues: S-adenosylmethionine:tRNA ribosyltransferase-isomerase (341 aa).

It belongs to the QueA family. In terms of assembly, monomer.

The protein resides in the cytoplasm. It catalyses the reaction 7-aminomethyl-7-carbaguanosine(34) in tRNA + S-adenosyl-L-methionine = epoxyqueuosine(34) in tRNA + adenine + L-methionine + 2 H(+). Its pathway is tRNA modification; tRNA-queuosine biosynthesis. Its function is as follows. Transfers and isomerizes the ribose moiety from AdoMet to the 7-aminomethyl group of 7-deazaguanine (preQ1-tRNA) to give epoxyqueuosine (oQ-tRNA). This Clostridium perfringens (strain ATCC 13124 / DSM 756 / JCM 1290 / NCIMB 6125 / NCTC 8237 / Type A) protein is S-adenosylmethionine:tRNA ribosyltransferase-isomerase.